A 218-amino-acid chain; its full sequence is MSIGIVGRKAGMTRVFTEDGASVPVTVIEASPNRVTQVRTPERDGYSGVQVTAGSRRPNRVSKPMAGHFAAAGVDAGRGVWEFRVSDGQAIELEAGKELTVETFEAGQVVDITGTSKGKGFAGTVKRHNFRTQDATHGNSLAHRAPGSIGQNQTPGRVFKGKKMAGQMGNKRSTVKNLEVVRVDAERHLLLVRGSVPGAVGSDVIVRPARNQRKKGDS.

N5-methylglutamine is present on Gln153.

This sequence belongs to the universal ribosomal protein uL3 family. In terms of assembly, part of the 50S ribosomal subunit. Forms a cluster with proteins L14 and L19. Post-translationally, methylated by PrmB.

In terms of biological role, one of the primary rRNA binding proteins, it binds directly near the 3'-end of the 23S rRNA, where it nucleates assembly of the 50S subunit. The protein is Large ribosomal subunit protein uL3 of Alkalilimnicola ehrlichii (strain ATCC BAA-1101 / DSM 17681 / MLHE-1).